A 571-amino-acid polypeptide reads, in one-letter code: Sulfite reductase [NADPH] hemoprotein beta-component (571 aa).

The [4Fe-4S] cluster site is built by cysteine 436, cysteine 442, cysteine 481, and cysteine 485. Cysteine 485 is a binding site for siroheme.

This sequence belongs to the nitrite and sulfite reductase 4Fe-4S domain family. In terms of assembly, alpha(8)-beta(8). The alpha component is a flavoprotein, the beta component is a hemoprotein. Siroheme is required as a cofactor. Requires [4Fe-4S] cluster as cofactor.

The catalysed reaction is hydrogen sulfide + 3 NADP(+) + 3 H2O = sulfite + 3 NADPH + 4 H(+). It participates in sulfur metabolism; hydrogen sulfide biosynthesis; hydrogen sulfide from sulfite (NADPH route): step 1/1. Functionally, component of the sulfite reductase complex that catalyzes the 6-electron reduction of sulfite to sulfide. This is one of several activities required for the biosynthesis of L-cysteine from sulfate. This is Sulfite reductase [NADPH] hemoprotein beta-component from Anoxybacillus flavithermus (strain DSM 21510 / WK1).